Reading from the N-terminus, the 35-residue chain is Photosystem II reaction center protein T (35 aa).

The helical transmembrane segment at 3-23 (ALVYTFLLIGTLGIIFFAIFF) threads the bilayer.

The protein belongs to the PsbT family. PSII is composed of 1 copy each of membrane proteins PsbA, PsbB, PsbC, PsbD, PsbE, PsbF, PsbH, PsbI, PsbJ, PsbK, PsbL, PsbM, PsbT, PsbY, PsbZ, Psb30/Ycf12, at least 3 peripheral proteins of the oxygen-evolving complex and a large number of cofactors. It forms dimeric complexes.

It is found in the plastid. The protein localises to the chloroplast thylakoid membrane. Found at the monomer-monomer interface of the photosystem II (PS II) dimer, plays a role in assembly and dimerization of PSII. PSII is a light-driven water plastoquinone oxidoreductase, using light energy to abstract electrons from H(2)O, generating a proton gradient subsequently used for ATP formation. The protein is Photosystem II reaction center protein T of Coleochaete orbicularis (Charophycean green alga).